The primary structure comprises 315 residues: MKLLAVKVECSHELEDGLSFFMQDELDAQGIESRKRSDFVAEGQKHDSSLVELDDIENLPKDLELTAYFNYENADKKELVKKITDKIAEMKGYGLNTGEVSISTKEVADEDWNTAWQKYYHVIDFSRHLAIVPEWEDYHPAFSDQKLIRLDPGLAFGTGGHTTTQLVLLAMERALVKPMSVLDIGTGSGILAIAASKLGASHVLGTDISDEAVTAAKENIALNDVNNINVRKANLLKDIDDKYDLIVANILADILLELIPDLDSHLNKEGKVIFSGIDYLQLPKVEKALAENNFEIKMKMQEGRWIGLLIARKPD.

S-adenosyl-L-methionine is bound by residues threonine 164, glycine 185, aspartate 207, and asparagine 249.

It belongs to the methyltransferase superfamily. PrmA family.

Its subcellular location is the cytoplasm. The catalysed reaction is L-lysyl-[protein] + 3 S-adenosyl-L-methionine = N(6),N(6),N(6)-trimethyl-L-lysyl-[protein] + 3 S-adenosyl-L-homocysteine + 3 H(+). Methylates ribosomal protein L11. The sequence is that of Ribosomal protein L11 methyltransferase from Lactobacillus gasseri (strain ATCC 33323 / DSM 20243 / BCRC 14619 / CIP 102991 / JCM 1131 / KCTC 3163 / NCIMB 11718 / NCTC 13722 / AM63).